The following is a 487-amino-acid chain: MSPVYVNLLGSVGLLAFWYFSYRWIQRKRLEDPLPPWLRKKKACALTRRSRHRLRRQHGVIDGENSETERSVDLVAALLAEAGEESVTEDTEREDTEEEREDEEEENEARTPEVNPIDAEGLSGLAREACEALKKALRRHRFLWQRRQRARMLQHNGPQQSHHAAVFCRVHGLRGFQVSVWLLLTLLWSTGHGVSVRCTYHGTDVNRTSNTTSMNCHLNCTRNHTQIYNGPCLGTEARLPLNVTFNQSRRKWHSVMLKFGFQYHLEGWFPLRVLNESREINVTEVHGEVACFRNDTNVTVGQLTLNFTGHSYVLRAIAHTSPFESYVRWEETNVTDNATSSENTTTVMSTLTKYAESDYIFLQDMCPRFLKRTVKLTRNKTKHNVTVTGNNMTTLPVWTPECKGWTYWTTLSVMWRNRRSALLRAKSRALGHWALLSICTVAAGSIALLSLFCILLIGLRRDLLEDFRYICRDEGSSSTKNDVHRIV.

An N-terminal signal peptide occupies residues 1–22 (MSPVYVNLLGSVGLLAFWYFSY). Residues 83 to 107 (GEESVTEDTEREDTEEEREDEEEEN) are compositionally biased toward acidic residues. The tract at residues 83–121 (GEESVTEDTEREDTEEEREDEEEENEARTPEVNPIDAEG) is disordered. 17 N-linked (GlcNAc...) asparagine; by host glycosylation sites follow: N206, N210, N219, N223, N242, N246, N275, N281, N294, N297, N306, N333, N337, N343, N379, N384, and N391. A helical membrane pass occupies residues 433 to 459 (WALLSICTVAAGSIALLSLFCILLIGL).

The protein belongs to the immediate early glycoprotein family. As to quaternary structure, interacts with host BAX. Interacts with host RSAD2/viperin; this interaction results in RSAD2/viperin relocalization from the endoplasmic reticulum to the mitochondria, actin cytoskeleton disruption and enhancement of infection. Interacts with host PEX19; this interaction inhibits the peroxisomal-dependent antiviral signaling. Interacts with host CHCHD6; this interaction rewires mitochondria by engaging the conserved MICOS complex.

It localises to the host endoplasmic reticulum membrane. The protein resides in the host Golgi apparatus membrane. Its subcellular location is the host mitochondrion membrane. The protein localises to the host peroxisome. In terms of biological role, multifunctional transmembrane protein that plays several key roles in viral replication. Rapidely traffics from the host endoplasmic reticulum to the outer mitochondrial membrane where it acts to inhibit host immune response, block apoptotic signaling, regulate calcium flux, and induce mitochondrial fragmentation. Sequesters proapoptotic BAX at the outer mitochondrial membrane and prevents cytochrome c release and subsequent initiation of the proapoptotic cascade. Also provoques a calcium efflux from host endoplasmic reticulum and F-actin cytoskeleton disruption. Participates in the increase of host mitochondrial biogenesis, thus promoting viral replication by efficient use of newly made mitochondria. Additionally, a subset of vMIA localizes to peroxisomes, causing fragmentation and blocking peroxisomal MAVS signaling. Mechanistically, inhibits host MAVS oligomerization at peroxisomes in a mitochondrial fission factors (MFF)-dependent manner and in mitochondria independently of mitochondrial fission factors. Plays an essential role in the trafficking of host viperin/RSAD2 from the endoplasmic reticulum to the viral assembly compartment via the mitochondria during viral infection as failure of viperin to localize to the mitochondria results in insufficient lipogenesis and thus reduces viral replication. Its function is as follows. May play a role in escape from the host antiviral response. The protein is UL37 immediate early glycoprotein (UL37) of Human cytomegalovirus (strain AD169) (HHV-5).